Reading from the N-terminus, the 725-residue chain is Beta-adducin (725 aa).

Residues 1-22 (MSEDTVPEAASPPPSQGQHYFD) are disordered. Serine 11 and serine 25 each carry phosphoserine. Position 55 is a phosphothreonine (threonine 55). A phosphoserine mark is found at serine 60 and serine 344. The tract at residues 425–444 (KQQKEKTRWLNTPNTYLRVN) is interaction with calmodulin. The segment at 525–725 (AEKSRSPSTE…KSKKKEKVES (201 aa)) is disordered. A phosphoserine mark is found at serine 530 and serine 532. A Phosphothreonine modification is found at threonine 533. At serine 535 the chain carries Phosphoserine. Threonine 561 carries the post-translational modification Phosphothreonine. A compositionally biased stretch (basic and acidic residues) spans 566–588 (EEYKKEVERKKLEQEQEGEKDAA). Phosphoserine is present on residues serine 594, serine 598, serine 602, and serine 606. The segment covering 596-621 (VKSTPASPVQSPTRAGTKSPAVSPSK) has biased composition (polar residues). Phosphothreonine is present on threonine 612. A phosphoserine mark is found at serine 614, serine 618, and serine 620. 2 stretches are compositionally biased toward basic and acidic residues: residues 622–631 (ASEDAKKTEV) and 639–654 (EPEKPEGVVVNGKEEE). The residue at position 674 (threonine 674) is a Phosphothreonine. Phosphoserine occurs at positions 678, 685, 688, 692, 696, 698, 700, 702, and 712. The span at 687–700 (TSGPLSPEGSPSKS) shows a compositional bias: low complexity. Residues 701–725 (PSKKKKKFRTPSFLKKSKKKEKVES) show a composition bias toward basic residues. The interval 703-720 (KKKKKFRTPSFLKKSKKK) is interaction with calmodulin.

Belongs to the aldolase class II family. Adducin subfamily. Heterodimer of an alpha and a beta subunit. Found in a complex with ADD2, DMTN and SLC2A1. Interacts with SLC2A1. In terms of tissue distribution, found in liver, kidney, spleen, heart and brain.

It localises to the cytoplasm. Its subcellular location is the cytoskeleton. It is found in the cell membrane. Its function is as follows. Membrane-cytoskeleton-associated protein that promotes the assembly of the spectrin-actin network. Binds to the erythrocyte membrane receptor SLC2A1/GLUT1 and may therefore provide a link between the spectrin cytoskeleton to the plasma membrane. Binds to calmodulin. Calmodulin binds preferentially to the beta subunit. This is Beta-adducin (Add2) from Rattus norvegicus (Rat).